A 195-amino-acid polypeptide reads, in one-letter code: MSVHIELPTELRPLMKRPLGTLYRGKGRDTVEKFVGELASPTKLISVGDVTTFHLLEAGIIPDICIVDNRTKRKPVSRDVSDRNRDKVYEEVSVDNPAGIITDELIKTLCEAFDSEKLLRIFVRGEEDLATLPVILMAPLGSVVLYGQPDEGVVFVRVTEEKKEEIRVLFEKLISKNQNTELDKIRRILDGHKDP.

Residues Asp-49, Val-50, Asp-68, Glu-127, and Asp-150 each coordinate GTP.

Belongs to the GTP-dependent DPCK family.

The catalysed reaction is 3'-dephospho-CoA + GTP = GDP + CoA + H(+). It functions in the pathway cofactor biosynthesis; coenzyme A biosynthesis. Catalyzes the GTP-dependent phosphorylation of the 3'-hydroxyl group of dephosphocoenzyme A to form coenzyme A (CoA). The protein is GTP-dependent dephospho-CoA kinase of Methanosarcina acetivorans (strain ATCC 35395 / DSM 2834 / JCM 12185 / C2A).